A 487-amino-acid chain; its full sequence is Malonate-semialdehyde dehydrogenase 2 (487 aa).

Positions 154, 178, 181, 182, and 231 each coordinate NAD(+). Residue cysteine 286 is the Nucleophile of the active site. Glutamate 386 is a binding site for NAD(+).

This sequence belongs to the aldehyde dehydrogenase family. IolA subfamily. Homotetramer.

It catalyses the reaction 3-oxopropanoate + NAD(+) + CoA + H2O = hydrogencarbonate + acetyl-CoA + NADH + H(+). It carries out the reaction 2-methyl-3-oxopropanoate + NAD(+) + CoA + H2O = propanoyl-CoA + hydrogencarbonate + NADH + H(+). It functions in the pathway polyol metabolism; myo-inositol degradation into acetyl-CoA; acetyl-CoA from myo-inositol: step 7/7. In terms of biological role, catalyzes the oxidation of malonate semialdehyde (MSA) and methylmalonate semialdehyde (MMSA) into acetyl-CoA and propanoyl-CoA, respectively. Is involved in a myo-inositol catabolic pathway. Bicarbonate, and not CO2, is the end-product of the enzymatic reaction. The protein is Malonate-semialdehyde dehydrogenase 2 of Bacillus anthracis.